Reading from the N-terminus, the 328-residue chain is Malate dehydrogenase (328 aa).

An NAD(+)-binding site is contributed by 11 to 17 (GAAGQIG). Residues Arg94 and Arg100 each coordinate substrate. Residues Asn107, Gln114, and 131 to 133 (VGN) contribute to the NAD(+) site. Residues Asn133 and Arg164 each coordinate substrate. His189 (proton acceptor) is an active-site residue.

It belongs to the LDH/MDH superfamily. MDH type 2 family.

It catalyses the reaction (S)-malate + NAD(+) = oxaloacetate + NADH + H(+). Its function is as follows. Catalyzes the reversible oxidation of malate to oxaloacetate. The protein is Malate dehydrogenase of Stenotrophomonas maltophilia (strain K279a).